The following is a 627-amino-acid chain: Pentatricopeptide repeat-containing protein At2g15630, mitochondrial (627 aa).

The N-terminal 29 residues, 1-29 (MRRFTVPCILRHRISILSGAGYSPAAARL), are a transit peptide targeting the mitochondrion. PPR repeat units lie at residues 154–188 (STIL…GFYP), 189–223 (KTET…EIKS), 224–258 (NVYT…GIKP), 259–293 (TIVT…GFQP), 294–324 (DMQT…IGLV), 326–360 (DSVS…GMVP), 361–395 (TFYT…GIVL), 396–430 (DSVT…GIQP), 431–465 (TQFT…GMKP), 466–500 (DLVM…SINP), 501–535 (DDVT…GIKP), 536–570 (DHIS…GFNP), and 571–605 (TLLT…GIVP).

The protein belongs to the PPR family. P subfamily.

It is found in the mitochondrion. The chain is Pentatricopeptide repeat-containing protein At2g15630, mitochondrial from Arabidopsis thaliana (Mouse-ear cress).